The primary structure comprises 152 residues: Superoxide dismutase [Cu-Zn] 2 (152 aa).

N-linked (GlcNAc...) asparagine glycans are attached at residues N9 and N33. Residues H45, H47, and H62 each contribute to the Cu cation site. C56 and C145 are oxidised to a cystine. Zn(2+)-binding residues include H62, H70, H79, and D82. A glycan (N-linked (GlcNAc...) asparagine) is linked at N85. H119 is a binding site for Cu cation.

The protein belongs to the Cu-Zn superoxide dismutase family. Cu cation is required as a cofactor. Zn(2+) serves as cofactor. As to expression, expressed in fruits, leaves and pollen grains.

It localises to the cytoplasm. It is found in the endoplasmic reticulum. The catalysed reaction is 2 superoxide + 2 H(+) = H2O2 + O2. Its activity is regulated as follows. Inhibited by KCN and H(2)O(2). Functionally, destroys radicals which are normally produced within the cells and which are toxic to biological systems. Probably involved in the protection against oxidative stress during pollen development. The sequence is that of Superoxide dismutase [Cu-Zn] 2 (OLE5) from Olea europaea (Common olive).